The primary structure comprises 244 residues: LexA repressor (244 aa).

The tract at residues 1–24 (MSDSSDTTVDGASDGASDGASGAD) is disordered. The segment covering 10-24 (DGASDGASDGASGAD) has biased composition (low complexity). Positions 58-78 (IREIGDAVGLTSTSSVAHQLR) form a DNA-binding region, H-T-H motif. Catalysis depends on for autocatalytic cleavage activity residues Ser168 and Lys205.

This sequence belongs to the peptidase S24 family. Homodimer.

The enzyme catalyses Hydrolysis of Ala-|-Gly bond in repressor LexA.. In terms of biological role, represses a number of genes involved in the response to DNA damage (SOS response), including recA and lexA. In the presence of single-stranded DNA, RecA interacts with LexA causing an autocatalytic cleavage which disrupts the DNA-binding part of LexA, leading to derepression of the SOS regulon and eventually DNA repair. The polypeptide is LexA repressor (Mycobacterium marinum (strain ATCC BAA-535 / M)).